The chain runs to 151 residues: Protein E6 (151 aa).

2 zinc fingers span residues 30 to 66 (CVYCKKTLEWADVYNFAICDLRIVYRNDSAYGACKKC) and 103 to 139 (CHRCQIPLGPEEKQRIVDEKRRFHEIAGYWKGLCTNC). Positions 149–151 (TQV) match the PDZ-binding domain motif.

The protein belongs to the papillomaviridae E6 protein family. In terms of assembly, forms homodimers. Interacts with ubiquitin-protein ligase UBE3A/E6-AP and thus forms a complex with human TP53. Interacts with human NFX1 and MAGI3. Interacts with human IRF3; this interaction inhibits the establishment of antiviral state. Interacts with human TYK2; this interaction inhibits JAK-STAT activation by interferon alpha. Interacts with host DLG1; this interaction leads to the proteasomal degradation of DLG1.

Its subcellular location is the host cytoplasm. It is found in the host nucleus. In terms of biological role, plays a major role in the induction and maintenance of cellular transformation. Acts mainly as an oncoprotein by stimulating the destruction of many host cell key regulatory proteins. E6 associates with host UBE3A/E6-AP ubiquitin-protein ligase, and inactivates tumor suppressors TP53 and TP73 by targeting them to the 26S proteasome for degradation. In turn, DNA damage and chromosomal instabilities increase and lead to cell proliferation and cancer development. The complex E6/E6AP targets several other substrates to degradation via the proteasome including host DLG1 or NFX1, a repressor of human telomerase reverse transcriptase (hTERT). The resulting increased expression of hTERT prevents the shortening of telomere length leading to cell immortalization. Other cellular targets including BAK1, Fas-associated death domain-containing protein (FADD) and procaspase 8, are degraded by E6/E6AP causing inhibition of apoptosis. E6 also inhibits immune response by interacting with host IRF3 and TYK2. These interactions prevent IRF3 transcriptional activities and inhibit TYK2-mediated JAK-STAT activation by interferon alpha resulting in inhibition of the interferon signaling pathway. The polypeptide is Protein E6 (Homo sapiens (Human)).